Consider the following 1081-residue polypeptide: Disheveled-associated activator of morphogenesis 1-A (1081 aa).

Residues 45–418 (LPVPPVEELD…QIVIQNEKGQ (374 aa)) enclose the GBD/FH3 domain. Disordered stretches follow at residues 455 to 476 (KEHN…AKTQ) and 519 to 615 (RTVC…PLKS). The span at 526-536 (PGGPPPPPGAP) shows a compositional bias: pro residues. Low complexity predominate over residues 538–547 (GPMSMPSGNF). The span at 548–585 (MPPPPPPPPPFPGGMAPPPPPPPPPPPPPGGPPPPPGL) shows a compositional bias: pro residues. Residues 586 to 600 (PLLGAAPPGAPLGLS) are compositionally biased toward low complexity. Residues 603-1012 (KKNIPQPKNP…EERRIRMEAQ (410 aa)) enclose the FH2 domain. The segment at 696–705 (AQNCNILLSR) is actin-binding. The segment covering 1013-1029 (LKEQRERERKARKAKEN) has biased composition (basic and acidic residues). Disordered stretches follow at residues 1013-1038 (LKEQ…EFDD) and 1060-1081 (RKRI…KLNY). The DAD domain occupies 1030–1061 (GEEEGEFDDLVSALRSGEVFDKDLSKLKRNRK). Basic and acidic residues predominate over residues 1070–1081 (SSRERPVTKLNY).

It localises to the cytoplasm. It is found in the cytoskeleton. The protein resides in the cilium basal body. Binds to disheveled (dsh) and Rho, and mediates Wnt-induced dsh-Rho complex formation during gastrulation. May play a role as a scaffolding protein to recruit Rho-GDP and Rho-GEF, thereby enhancing Rho-GTP formation. Can direct nucleation and elongation of new actin filaments. Involved in building functional cilia. Involved in building functional cilia. Involved in the organization of the subapical actin network in multiciliated epithelial cells. This is Disheveled-associated activator of morphogenesis 1-A (daam1-a) from Xenopus laevis (African clawed frog).